The chain runs to 440 residues: Adenylosuccinate lyase (440 aa).

Residues 4 to 5 (RY), 67 to 69 (KHD), and 93 to 94 (TS) each bind N(6)-(1,2-dicarboxyethyl)-AMP. H141 functions as the Proton donor/acceptor in the catalytic mechanism. Q212 is a binding site for N(6)-(1,2-dicarboxyethyl)-AMP. The active-site Proton donor/acceptor is S262. N(6)-(1,2-dicarboxyethyl)-AMP-binding positions include S263, 268–270 (KRN), N276, and 307–311 (SVERF).

This sequence belongs to the lyase 1 family. Adenylosuccinate lyase subfamily. In terms of assembly, homotetramer. Residues from neighboring subunits contribute catalytic and substrate-binding residues to each active site.

The enzyme catalyses N(6)-(1,2-dicarboxyethyl)-AMP = fumarate + AMP. It carries out the reaction (2S)-2-[5-amino-1-(5-phospho-beta-D-ribosyl)imidazole-4-carboxamido]succinate = 5-amino-1-(5-phospho-beta-D-ribosyl)imidazole-4-carboxamide + fumarate. Its pathway is purine metabolism; AMP biosynthesis via de novo pathway; AMP from IMP: step 2/2. The protein operates within purine metabolism; IMP biosynthesis via de novo pathway; 5-amino-1-(5-phospho-D-ribosyl)imidazole-4-carboxamide from 5-amino-1-(5-phospho-D-ribosyl)imidazole-4-carboxylate: step 2/2. Catalyzes two reactions in de novo purine nucleotide biosynthesis. Catalyzes the breakdown of 5-aminoimidazole- (N-succinylocarboxamide) ribotide (SAICAR or 2-[5-amino-1-(5-phospho-beta-D-ribosyl)imidazole-4-carboxamido]succinate) to 5-aminoimidazole-4-carboxamide ribotide (AICAR or 5-amino-1-(5-phospho-beta-D-ribosyl)imidazole-4-carboxamide) and fumarate, and of adenylosuccinate (ADS or N(6)-(1,2-dicarboxyethyl)-AMP) to adenosine monophosphate (AMP) and fumarate. This is Adenylosuccinate lyase (purB) from Helicobacter pylori (strain ATCC 700392 / 26695) (Campylobacter pylori).